The primary structure comprises 249 residues: NAD(P)H-quinone oxidoreductase subunit K 2 (249 aa).

[4Fe-4S] cluster-binding residues include cysteine 54, cysteine 55, cysteine 119, and cysteine 150.

Belongs to the complex I 20 kDa subunit family. In terms of assembly, NDH-1 can be composed of about 15 different subunits; different subcomplexes with different compositions have been identified which probably have different functions. Requires [4Fe-4S] cluster as cofactor.

The protein localises to the cell inner membrane. It carries out the reaction a plastoquinone + NADH + (n+1) H(+)(in) = a plastoquinol + NAD(+) + n H(+)(out). The enzyme catalyses a plastoquinone + NADPH + (n+1) H(+)(in) = a plastoquinol + NADP(+) + n H(+)(out). In terms of biological role, NDH-1 shuttles electrons from an unknown electron donor, via FMN and iron-sulfur (Fe-S) centers, to quinones in the respiratory and/or the photosynthetic chain. The immediate electron acceptor for the enzyme in this species is believed to be plastoquinone. Couples the redox reaction to proton translocation, and thus conserves the redox energy in a proton gradient. Cyanobacterial NDH-1 also plays a role in inorganic carbon-concentration. The protein is NAD(P)H-quinone oxidoreductase subunit K 2 of Gloeobacter violaceus (strain ATCC 29082 / PCC 7421).